We begin with the raw amino-acid sequence, 631 residues long: tRNA uridine 5-carboxymethylaminomethyl modification enzyme MnmG (631 aa).

Position 14–19 (14–19 (GGGHAG)) interacts with FAD. 274–288 (GPRYCPSIEDKIHRF) lines the NAD(+) pocket.

It belongs to the MnmG family. Homodimer. Heterotetramer of two MnmE and two MnmG subunits. FAD serves as cofactor.

Its subcellular location is the cytoplasm. Its function is as follows. NAD-binding protein involved in the addition of a carboxymethylaminomethyl (cmnm) group at the wobble position (U34) of certain tRNAs, forming tRNA-cmnm(5)s(2)U34. The protein is tRNA uridine 5-carboxymethylaminomethyl modification enzyme MnmG of Pseudomonas paraeruginosa (strain DSM 24068 / PA7) (Pseudomonas aeruginosa (strain PA7)).